The sequence spans 380 residues: Queuine tRNA-ribosyltransferase (380 aa).

Catalysis depends on Asp96, which acts as the Proton acceptor. Substrate contacts are provided by residues 96–100 (DSGGF), Asp150, Gln193, and Gly220. The tract at residues 251–257 (GVGAPDS) is RNA binding. Residue Asp270 is the Nucleophile of the active site. Positions 275-279 (TRIAR) are RNA binding; important for wobble base 34 recognition. Cys308, Cys310, Cys313, and His339 together coordinate Zn(2+).

Belongs to the queuine tRNA-ribosyltransferase family. In terms of assembly, homodimer. Within each dimer, one monomer is responsible for RNA recognition and catalysis, while the other monomer binds to the replacement base PreQ1. The cofactor is Zn(2+).

It carries out the reaction 7-aminomethyl-7-carbaguanine + guanosine(34) in tRNA = 7-aminomethyl-7-carbaguanosine(34) in tRNA + guanine. It participates in tRNA modification; tRNA-queuosine biosynthesis. In terms of biological role, catalyzes the base-exchange of a guanine (G) residue with the queuine precursor 7-aminomethyl-7-deazaguanine (PreQ1) at position 34 (anticodon wobble position) in tRNAs with GU(N) anticodons (tRNA-Asp, -Asn, -His and -Tyr). Catalysis occurs through a double-displacement mechanism. The nucleophile active site attacks the C1' of nucleotide 34 to detach the guanine base from the RNA, forming a covalent enzyme-RNA intermediate. The proton acceptor active site deprotonates the incoming PreQ1, allowing a nucleophilic attack on the C1' of the ribose to form the product. After dissociation, two additional enzymatic reactions on the tRNA convert PreQ1 to queuine (Q), resulting in the hypermodified nucleoside queuosine (7-(((4,5-cis-dihydroxy-2-cyclopenten-1-yl)amino)methyl)-7-deazaguanosine). The sequence is that of Queuine tRNA-ribosyltransferase from Streptococcus mutans serotype c (strain ATCC 700610 / UA159).